We begin with the raw amino-acid sequence, 243 residues long: Transcription factor TFIIS homolog (243 aa).

The TFIIS central domain occupies Met-77–Ser-201. The segment at Gln-202 to Ile-242 adopts a TFIIS-type zinc-finger fold. Positions 206, 209, 234, and 237 each coordinate Zn(2+).

Belongs to the TFS-II family.

In terms of biological role, putative initiation factor. Necessary for efficient transcription elongation past template-encoded arresting sites. The chain is Transcription factor TFIIS homolog from Ornithodoros (relapsing fever ticks).